Consider the following 344-residue polypeptide: Anamorsin homolog 1 (344 aa).

The interval 1–169 (MANNVGVLLA…DTGSVFQIRK (169 aa)) is N-terminal SAM-like domain. The linker stretch occupies residues 170–233 (KVSNQNGNFR…EDDLLTEEDL (64 aa)). The [2Fe-2S] cluster site is built by Cys-244, Cys-251, Cys-254, and Cys-256. The tract at residues 244–256 (CAPTKKACKNCTC) is fe-S binding site A. [4Fe-4S] cluster-binding residues include Cys-282, Cys-285, Cys-293, and Cys-296. Short sequence motifs (cx2C motif) lie at residues 282-285 (CGSC) and 293-296 (CAGC). The segment at 282-296 (CGSCGLGDAFRCAGC) is fe-S binding site B.

This sequence belongs to the anamorsin family. As to quaternary structure, monomer. Requires [2Fe-2S] cluster as cofactor. The cofactor is [4Fe-4S] cluster.

It is found in the cytoplasm. Its subcellular location is the mitochondrion intermembrane space. Its function is as follows. Component of the cytosolic iron-sulfur (Fe-S) protein assembly (CIA) machinery. Required for the maturation of extramitochondrial Fe-S proteins. Part of an electron transfer chain functioning in an early step of cytosolic Fe-S biogenesis, facilitating the de novo assembly of a [4Fe-4S] cluster on the cytosolic Fe-S scaffold complex. Electrons are transferred from NADPH via a FAD- and FMN-containing diflavin oxidoreductase. Together with the diflavin oxidoreductase, also required for the assembly of the diferric tyrosyl radical cofactor of ribonucleotide reductase (RNR), probably by providing electrons for reduction during radical cofactor maturation in the catalytic small subunit. The sequence is that of Anamorsin homolog 1 from Physcomitrium patens (Spreading-leaved earth moss).